The sequence spans 465 residues: RuvB-like helicase 2 (465 aa).

72–79 serves as a coordination point for ATP; that stretch reads GPPSTGKT.

This sequence belongs to the RuvB family. As to quaternary structure, may form heterododecamers with RVB1. Component of the SWR1 chromatin remodeling complex, the INO80 chromatin remodeling complex, and of the R2TP complex. Interacts with dil1.

Its subcellular location is the nucleus. The enzyme catalyses ATP + H2O = ADP + phosphate + H(+). Its function is as follows. DNA helicase which participates in several chromatin remodeling complexes, including the SWR1 and the INO80 complexes. The SWR1 complex mediates the ATP-dependent exchange of histone H2A for the H2A variant HZT1 leading to transcriptional regulation of selected genes by chromatin remodeling. The INO80 complex remodels chromatin by shifting nucleosomes and is involved in DNA repair. Also involved in pre-rRNA processing. The sequence is that of RuvB-like helicase 2 (rvb2) from Schizosaccharomyces pombe (strain 972 / ATCC 24843) (Fission yeast).